We begin with the raw amino-acid sequence, 185 residues long: Ribosome-recycling factor (185 aa).

It belongs to the RRF family.

The protein resides in the cytoplasm. In terms of biological role, responsible for the release of ribosomes from messenger RNA at the termination of protein biosynthesis. May increase the efficiency of translation by recycling ribosomes from one round of translation to another. This chain is Ribosome-recycling factor, found in Frankia casuarinae (strain DSM 45818 / CECT 9043 / HFP020203 / CcI3).